Here is a 198-residue protein sequence, read N- to C-terminus: Recombination protein RecR (198 aa).

The segment at C57–C72 adopts a C4-type zinc-finger fold. The Toprim domain maps to E80 to A175.

Belongs to the RecR family.

Its function is as follows. May play a role in DNA repair. It seems to be involved in an RecBC-independent recombinational process of DNA repair. It may act with RecF and RecO. The sequence is that of Recombination protein RecR from Streptococcus equi subsp. zooepidemicus (strain MGCS10565).